Here is a 198-residue protein sequence, read N- to C-terminus: Nucleoplasmin (198 aa).

Residues 35-38 (SDED) form an acidic tract A1 region. The span at 125–145 (SWAEEEGEEEVEEEEEEEDPE) shows a compositional bias: acidic residues. Positions 125 to 198 (SWAEEEGEEE…GRGRKPAAKK (74 aa)) are disordered. The interval 128–145 (EEEGEEEVEEEEEEEDPE) is acidic tract A2. Basic residues predominate over residues 150–167 (AVKRPAASKKGSQAKKKK). The Bipartite nuclear localization signal signature appears at 152 to 167 (KRPAASKKGSQAKKKK). Residues 172–174 (EEE) are acidic tract A3. Residues 183–198 (KKGKGAGRGRKPAAKK) show a composition bias toward basic residues.

The protein belongs to the nucleoplasmin family. In terms of assembly, homopentamer. Expressed in oocytes.

It is found in the nucleus. Acts as a chaperone for histones, such as histone H2A-H2B, and thus regulates the assembly of nucleosome cores. Involved in chromatin remodeling, especially during fertilization and early embryonic development. May be involved in sperm chromatin decondensation during fertilization. This Rhinella marina (Cane toad) protein is Nucleoplasmin.